A 350-amino-acid chain; its full sequence is MKDFNINKLVRPNVAGLKPYSSARDEFKTQGAEMVFLDANENPNDNGLNRYPDPQQTSVKEKLSETRGVSPNNILLGNGSDEVLDLIFRAFCEPGKDNVITLPPTYGMYKVLSDINNIENREVLLNHDFEPDLTAIFKQITKDTKIIFLCSPNNPSGNSFEAEKIEMILEKFNGLVVIDEAYIDFSDSKSWIHRLEDFPNLIVTQTFSKAFGRAGIRLGVLYSSDEIIAILNKIKPPYNVNQLTQKESLKILFNLDSIKLQVAEIKNERTILSKQLLEVNFVSKIYRSDANFLLIEVDHANKRYDQFLEKGIVIRNRSNQPLCENCLRITIGTKEENKKLIKAFKELENE.

The residue at position 209 (Lys209) is an N6-(pyridoxal phosphate)lysine.

Belongs to the class-II pyridoxal-phosphate-dependent aminotransferase family. Histidinol-phosphate aminotransferase subfamily. Homodimer. The cofactor is pyridoxal 5'-phosphate.

It carries out the reaction L-histidinol phosphate + 2-oxoglutarate = 3-(imidazol-4-yl)-2-oxopropyl phosphate + L-glutamate. It functions in the pathway amino-acid biosynthesis; L-histidine biosynthesis; L-histidine from 5-phospho-alpha-D-ribose 1-diphosphate: step 7/9. This chain is Histidinol-phosphate aminotransferase, found in Christiangramia forsetii (strain DSM 17595 / CGMCC 1.15422 / KT0803) (Gramella forsetii).